The following is a 216-amino-acid chain: Kynurenine formamidase (216 aa).

Residue W25 coordinates substrate. The Zn(2+) site is built by H55, H59, and D61. Catalysis depends on H65, which acts as the Proton donor/acceptor. 2 residues coordinate Zn(2+): H167 and E179.

Belongs to the Cyclase 1 superfamily. KynB family. Homodimer. Zn(2+) serves as cofactor.

It catalyses the reaction N-formyl-L-kynurenine + H2O = L-kynurenine + formate + H(+). It participates in amino-acid degradation; L-tryptophan degradation via kynurenine pathway; L-kynurenine from L-tryptophan: step 2/2. In terms of biological role, catalyzes the hydrolysis of N-formyl-L-kynurenine to L-kynurenine, the second step in the kynurenine pathway of tryptophan degradation. The sequence is that of Kynurenine formamidase from Cupriavidus necator (strain ATCC 17699 / DSM 428 / KCTC 22496 / NCIMB 10442 / H16 / Stanier 337) (Ralstonia eutropha).